The chain runs to 232 residues: MAVVALVPAAGRGVRLGEKLPKAFVELGGCTMLARAVDGLRKSGAIDRVVVIVPPELVESVVADLGRASDVDVVGGGAERTDSVRAGLSAAGDADFVLVHDAARALTPPALIARVVDALRAGSSAVIPVLPVTDTIKSVDVLGAVTGTPLRSELRAVQTPQGFSTDVLRSAYDAGDVAATDDAALVERLGVSVQTIPGDALAFKITTPLDLVLARALLISETELSADSQDGK.

It belongs to the IspD/TarI cytidylyltransferase family. IspD subfamily.

The catalysed reaction is 2-C-methyl-D-erythritol 4-phosphate + CTP + H(+) = 4-CDP-2-C-methyl-D-erythritol + diphosphate. Its pathway is isoprenoid biosynthesis; isopentenyl diphosphate biosynthesis via DXP pathway; isopentenyl diphosphate from 1-deoxy-D-xylulose 5-phosphate: step 2/6. Its function is as follows. Catalyzes the formation of 4-diphosphocytidyl-2-C-methyl-D-erythritol from CTP and 2-C-methyl-D-erythritol 4-phosphate (MEP). The protein is 2-C-methyl-D-erythritol 4-phosphate cytidylyltransferase of Rhodococcus erythropolis (strain PR4 / NBRC 100887).